The following is a 449-amino-acid chain: Probable glycosyltransferase 5 (449 aa).

Residues 1 to 14 (MMEKHGGKVTSDRR) are compositionally biased toward basic and acidic residues. Residues 1 to 24 (MMEKHGGKVTSDRRAGRRQHGQRC) form a disordered region. The Cytoplasmic portion of the chain corresponds to 1-28 (MMEKHGGKVTSDRRAGRRQHGQRCSASD). A helical; Signal-anchor for type II membrane protein membrane pass occupies residues 29–49 (AAPLVVVVILIVGALFLILGP). Over 50-449 (TGSSSFTVPR…HPTFRAARPT (400 aa)) the chain is Lumenal. Residues 74 to 109 (APPPPPPPAQMQAGANASSEEDSGLPPPRQLTDPPY) form a disordered region. Residues Asn-89, Asn-413, and Asn-422 are each glycosylated (N-linked (GlcNAc...) asparagine).

Belongs to the glycosyltransferase 34 family.

The protein resides in the golgi apparatus membrane. Its function is as follows. Probable glycosyltransferase that may be involved in the biosynthesis of xyloglucan. This chain is Probable glycosyltransferase 5, found in Oryza sativa subsp. indica (Rice).